The sequence spans 785 residues: Semaphorin-3F (785 aa).

Residues 1–18 (MLVAGLLLWASLLTGAWP) form the signal peptide. The region spanning 31–545 (RVRLSFKELK…SAVGVTHLSL (515 aa)) is the Sema domain. N-linked (GlcNAc...) asparagine glycosylation occurs at Asn53. A disulfide bridge connects residues Cys104 and Cys115. A glycan (N-linked (GlcNAc...) asparagine) is linked at Asn126. 5 disulfides stabilise this stretch: Cys133–Cys142, Cys300–Cys412, Cys324–Cys372, Cys548–Cys566, and Cys678–Cys746. One can recognise an Ig-like C2-type domain in the interval 605–690 (ANKNAVESVQ…TENNFKHVVT (86 aa)). The segment at 752-785 (HVPPSPREAPGAPRSPEPQDQKKPRNRRHHPPDT) is disordered. The segment covering 775–785 (PRNRRHHPPDT) has biased composition (basic residues).

Belongs to the semaphorin family. As to expression, expressed abundantly but differentially in a variety of neural and nonneural tissues. There is high expression in mammary gland, kidney, fetal brain, and lung and lower expression in heart and liver.

It localises to the secreted. Functionally, may play a role in cell motility and cell adhesion. This is Semaphorin-3F (SEMA3F) from Homo sapiens (Human).